We begin with the raw amino-acid sequence, 119 residues long: Ribonuclease P protein component (119 aa).

Belongs to the RnpA family. Consists of a catalytic RNA component (M1 or rnpB) and a protein subunit.

It carries out the reaction Endonucleolytic cleavage of RNA, removing 5'-extranucleotides from tRNA precursor.. RNaseP catalyzes the removal of the 5'-leader sequence from pre-tRNA to produce the mature 5'-terminus. It can also cleave other RNA substrates such as 4.5S RNA. The protein component plays an auxiliary but essential role in vivo by binding to the 5'-leader sequence and broadening the substrate specificity of the ribozyme. This Streptococcus pyogenes serotype M1 protein is Ribonuclease P protein component.